Consider the following 150-residue polypeptide: C-type lectin 16 (150 aa).

The N-terminal stretch at 1-27 (MKRVRVKVIFVSFGLLVVFLSLSGTAA) is a signal peptide. 3 cysteine pairs are disulfide-bonded: cysteine 29–cysteine 40, cysteine 57–cysteine 146, and cysteine 123–cysteine 138. The C-type lectin domain maps to 36-147 (YEGHCYKPFN…CRMLARFVCE (112 aa)).

Belongs to the snaclec family. In terms of assembly, heteromultimer; disulfide-linked. As to expression, expressed by the venom gland.

The protein resides in the secreted. Interferes with one step of hemostasis (modulation of platelet aggregation, or coagulation cascade, for example). In Crotalus adamanteus (Eastern diamondback rattlesnake), this protein is C-type lectin 16.